Here is a 349-residue protein sequence, read N- to C-terminus: 5-deoxyribose 1-phosphate isomerase (349 aa).

Residues 49–51 (RGA), R92, and Q199 contribute to the substrate site. Catalysis depends on D240, which acts as the Proton donor. Residue 250–251 (NK) coordinates substrate.

It belongs to the EIF-2B alpha/beta/delta subunits family. DrdI subfamily.

It carries out the reaction 5-deoxy-alpha-D-ribose 1-phosphate = 5-deoxy-D-ribulose 1-phosphate. It functions in the pathway carbohydrate degradation. Catalyzes the isomerization of 5-deoxy-alpha-D-ribose 1-phosphate to 5-deoxy-D-ribulose 1-phosphate, as part of a 5-deoxyribose salvage pathway that recycles this toxic radical SAM enzyme by-product to mainstream metabolites. This is 5-deoxyribose 1-phosphate isomerase from Clostridium botulinum (strain Langeland / NCTC 10281 / Type F).